Consider the following 100-residue polypeptide: Urease subunit gamma (100 aa).

Belongs to the urease gamma subunit family. In terms of assembly, heterotrimer of UreA (gamma), UreB (beta) and UreC (alpha) subunits. Three heterotrimers associate to form the active enzyme.

The protein resides in the cytoplasm. The enzyme catalyses urea + 2 H2O + H(+) = hydrogencarbonate + 2 NH4(+). Its pathway is nitrogen metabolism; urea degradation; CO(2) and NH(3) from urea (urease route): step 1/1. This chain is Urease subunit gamma, found in Burkholderia cenocepacia (strain ATCC BAA-245 / DSM 16553 / LMG 16656 / NCTC 13227 / J2315 / CF5610) (Burkholderia cepacia (strain J2315)).